Here is a 98-residue protein sequence, read N- to C-terminus: PqqA binding protein (98 aa).

Belongs to the PqqD family. As to quaternary structure, monomer. Interacts with PqqE.

It participates in cofactor biosynthesis; pyrroloquinoline quinone biosynthesis. Its function is as follows. Functions as a PqqA binding protein and presents PqqA to PqqE, in the pyrroloquinoline quinone (PQQ) biosynthetic pathway. This chain is PqqA binding protein, found in Rhizobium meliloti (strain 1021) (Ensifer meliloti).